A 493-amino-acid polypeptide reads, in one-letter code: Dipeptide permease D (493 aa).

13 helical membrane passes run 14-34 (VVAL…LLIL), 49-69 (ALFS…GYLA), 91-111 (LVLG…AIIV), 138-158 (GGFS…PIAC), 167-187 (WAMG…IFLC), 212-232 (NWGW…VLFW), 235-255 (WAVY…GKIY), 267-287 (LGLI…AQQG), 312-332 (MFQS…AWLI), 344-364 (IWGK…ILTL), 379-399 (LMIA…PVAM), 413-433 (VLTG…AGVI), and 458-478 (VFSE…LIWL).

The protein belongs to the major facilitator superfamily. Proton-dependent oligopeptide transporter (POT/PTR) (TC 2.A.17) family. DtpD subfamily.

The protein localises to the cell inner membrane. Probable proton-dependent permease that transports dipeptides. The protein is Dipeptide permease D of Citrobacter rodentium (strain ICC168) (Citrobacter freundii biotype 4280).